Consider the following 373-residue polypeptide: NADPH-dependent 3-keto-steroid reductase HSD3B3 (373 aa).

Residues 10 to 15 (GAGGFL), Y155, and K159 contribute to the NADP(+) site. Catalysis depends on K159, which acts as the Proton donor. Residues 288 to 308 (VALLYWFGFLLETVSFLLRPV) form a helical membrane-spanning segment.

Belongs to the 3-beta-HSD family. As to expression, high levels in adrenal gland, kidney and male liver (at protein level). Low levels in female liver (at protein level). Expressed in ovaries (at protein level).

It is found in the endoplasmic reticulum membrane. The protein resides in the mitochondrion membrane. The catalysed reaction is a 3beta-hydroxysteroid + NADP(+) = a 3-oxosteroid + NADPH + H(+). The enzyme catalyses 5alpha-androstane-3beta,17beta-diol + NADP(+) = 17beta-hydroxy-5alpha-androstan-3-one + NADPH + H(+). The protein operates within steroid metabolism. In terms of biological role, responsible for the reduction of the oxo group on the C-3 of 5alpha-androstane steroids. Catalyzes the conversion of dihydrotestosterone to its inactive form 5alpha-androstanediol, that does not bind androgen receptor/AR. Does not function as an isomerase. The protein is NADPH-dependent 3-keto-steroid reductase HSD3B3 (HSD3B3) of Mesocricetus auratus (Golden hamster).